The following is a 513-amino-acid chain: Bifunctional pantoate ligase/cytidylate kinase (513 aa).

A pantoate--beta-alanine ligase region spans residues 1 to 283 (MVQVFRTIAG…VGSTRLIDNL (283 aa)). An ATP-binding site is contributed by 30-37 (MGSLHAGH). His37 functions as the Proton donor in the catalytic mechanism. Residue Gln61 coordinates (R)-pantoate. Gln61 is a beta-alanine binding site. 150-153 (GAKD) is a binding site for ATP. Residue Gln156 participates in (R)-pantoate binding. Residues Val179 and 187-190 (MSSR) each bind ATP. The segment at 284-513 (VLNHRLPIIA…IELYKKYNKG (230 aa)) is cytidylate kinase.

It in the N-terminal section; belongs to the pantothenate synthetase family. The protein in the C-terminal section; belongs to the cytidylate kinase family. Type 1 subfamily.

The protein resides in the cytoplasm. It carries out the reaction (R)-pantoate + beta-alanine + ATP = (R)-pantothenate + AMP + diphosphate + H(+). The enzyme catalyses CMP + ATP = CDP + ADP. It catalyses the reaction dCMP + ATP = dCDP + ADP. The protein operates within cofactor biosynthesis; (R)-pantothenate biosynthesis; (R)-pantothenate from (R)-pantoate and beta-alanine: step 1/1. Catalyzes the condensation of pantoate with beta-alanine in an ATP-dependent reaction via a pantoyl-adenylate intermediate. Its function is as follows. Catalyzes the transfer of a phosphate group from ATP to either CMP or dCMP to form CDP or dCDP and ADP, respectively. The polypeptide is Bifunctional pantoate ligase/cytidylate kinase (Synechocystis sp. (strain ATCC 27184 / PCC 6803 / Kazusa)).